The sequence spans 207 residues: Guanylate kinase (207 aa).

The 180-residue stretch at 5 to 184 folds into the Guanylate kinase-like domain; the sequence is GNLFIVSAPS…ALADLKSIIF (180 aa). Residue 12 to 19 participates in ATP binding; that stretch reads APSGAGKS.

It belongs to the guanylate kinase family.

It is found in the cytoplasm. It carries out the reaction GMP + ATP = GDP + ADP. In terms of biological role, essential for recycling GMP and indirectly, cGMP. The sequence is that of Guanylate kinase from Shewanella denitrificans (strain OS217 / ATCC BAA-1090 / DSM 15013).